Here is a 469-residue protein sequence, read N- to C-terminus: Probable multidrug resistance protein NorM (469 aa).

The next 12 helical transmembrane spans lie at 10–30, 34–54, 74–94, 121–141, 179–199, 214–234, 264–284, 292–312, 335–355, 369–389, 409–429, and 437–457; these read IALS…GSEV, LLLA…GFVL, ALLW…TVLV, GLVM…FGIV, FPTM…SYAL, LGIA…LYLW, LPIG…TLLI, IAAH…PMGV, VAWA…SVLL, LVVA…QFPD, MLLA…GLGF, and GMWI…GWRF.

This sequence belongs to the multi antimicrobial extrusion (MATE) (TC 2.A.66.1) family.

Its subcellular location is the cell inner membrane. Its function is as follows. Multidrug efflux pump. The chain is Probable multidrug resistance protein NorM (norM) from Xylella fastidiosa (strain Temecula1 / ATCC 700964).